The chain runs to 551 residues: Scaffold protein OPG125 (551 aa).

Belongs to the orthopoxvirus protein OPG125 family. As to quaternary structure, homotrimer. Self-assembles to form a layer. Interacts with OPG158 (via N-terminus); this interaction is necessary for OPG125 association with membranes.

The protein resides in the membrane. Functionally, scaffold protein which forms a transitory spherical honeycomb lattice providing curvature and rigidity to the convex membrane of crescent and immature virions (IV). This association occurs concomitantly with viral membrane formation. Targeted by the drug rifampicin, which prevents the formation of this lattice, and hence virus morphogenesis. In the presence of rifampicin, irregularly shaped membranes that lack the honeycomb layer accumulate around areas of electron-dense viroplasm. This layer is lost from virions during maturation from IV to mature virion (MV), through the proteolysis of OPG158 N-terminus. The polypeptide is Scaffold protein OPG125 (OPG125) (Homo sapiens (Human)).